We begin with the raw amino-acid sequence, 386 residues long: 17-hydroxy-3-oxo-4-pregnene-20-carboxyl-CoA lyase (386 aa).

Tyr-292 acts as the Proton acceptor in catalysis. The active-site Proton donor is the Tyr-342.

It belongs to the thiolase-like superfamily. Homodimer. Interacts with the ChsH1/ChsH2 hydratase via the DUF35 C-terminal region of ChsH2 (ChsH2-DUF35). The ChsH1-ChsH2-Ltp2 protein complex is composed of two protomers that form a heterohexameric structure through the Ltp2 dimerization interface.

The catalysed reaction is 17-hydroxy-3-oxochol-4-en-22-oyl-CoA = androst-4-ene-3,17-dione + propanoyl-CoA. The protein operates within steroid metabolism; cholesterol degradation. Its function is as follows. Involved in cholesterol side chain degradation. When associated with the ChsH1/ChsH2 hydratase, catalyzes the retroaldol cleavage of 17-hydroxy-3-oxo-4-pregnene-20-carboxyl-CoA (17-HOPC-CoA) produced by the hydratase, forming androst-4-ene-3,17-dione and propionyl-CoA. This chain is 17-hydroxy-3-oxo-4-pregnene-20-carboxyl-CoA lyase, found in Mycobacterium tuberculosis (strain ATCC 25618 / H37Rv).